Here is a 696-residue protein sequence, read N- to C-terminus: D-(-)-3-hydroxybutyrate oligomer hydrolase (696 aa).

Positions 1-26 (MTKLGWGRRVVWGAALAAVAMLGACN) are cleaved as a signal peptide. Ser-309 serves as the catalytic Charge relay system.

This sequence belongs to the D-(-)-3-hydroxybutyrate oligomer hydrolase family.

Its subcellular location is the secreted. It catalyses the reaction (3R)-hydroxybutanoate dimer + H2O = 2 (R)-3-hydroxybutanoate + H(+). Its pathway is lipid metabolism; butanoate metabolism. Participates in the degradation of poly-3-hydroxybutyrate (PHB). It works downstream of poly(3-hydroxybutyrate) depolymerase, hydrolyzing D(-)-3-hydroxybutyrate oligomers of various length (3HB-oligomers) into 3HB-monomers. This is D-(-)-3-hydroxybutyrate oligomer hydrolase from Burkholderia cenocepacia (strain HI2424).